The sequence spans 132 residues: Small ribosomal subunit protein uS9 (132 aa).

This sequence belongs to the universal ribosomal protein uS9 family.

This is Small ribosomal subunit protein uS9 (rps9) from Halobacterium salinarum (strain ATCC 700922 / JCM 11081 / NRC-1) (Halobacterium halobium).